The following is a 307-amino-acid chain: Cilia-and flagella-associated protein 96 (307 aa).

Disordered regions lie at residues 73–102 (YSDP…SSGE) and 218–279 (HSQK…GPKT).

This sequence belongs to the CFAP96 family.

It is found in the cytoplasm. It localises to the cytoskeleton. The protein resides in the microtubule organizing center. Its subcellular location is the centrosome. The sequence is that of Cilia-and flagella-associated protein 96 (cfap96.L) from Xenopus laevis (African clawed frog).